The chain runs to 136 residues: Large ribosomal subunit protein uL16 (136 aa).

It belongs to the universal ribosomal protein uL16 family. As to quaternary structure, part of the 50S ribosomal subunit.

Binds 23S rRNA and is also seen to make contacts with the A and possibly P site tRNAs. This is Large ribosomal subunit protein uL16 from Ehrlichia ruminantium (strain Gardel).